The chain runs to 335 residues: Ferrochelatase (335 aa).

Fe cation contacts are provided by histidine 211 and glutamate 290.

Belongs to the ferrochelatase family.

The protein resides in the cytoplasm. It carries out the reaction heme b + 2 H(+) = protoporphyrin IX + Fe(2+). The protein operates within porphyrin-containing compound metabolism; protoheme biosynthesis; protoheme from protoporphyrin-IX: step 1/1. Its function is as follows. Catalyzes the ferrous insertion into protoporphyrin IX. This Sulfurihydrogenibium sp. (strain YO3AOP1) protein is Ferrochelatase.